The sequence spans 288 residues: N-acetyltransferase ECO1 (288 aa).

Positions 1-50 are disordered; that stretch reads MKRDITQLLSPELSQSSSRNDKKRKPTNSNKKVQTVLNFPSSSPNASQST. Residues 7 to 18 are compositionally biased toward low complexity; the sequence is QLLSPELSQSSS. Residues 27–50 are compositionally biased toward polar residues; sequence TNSNKKVQTVLNFPSSSPNASQST. The CCHH-type zinc-finger motif lies at 50 to 74; that stretch reads TTCPTCGMTYYSHVSKDNDVHNKYH.

The protein belongs to the acetyltransferase family. ECO subfamily.

Its subcellular location is the nucleus. Functionally, probable acetyltransferase required for the establishment of sister chromatid cohesion and couple the processes of cohesion and DNA replication to ensure that only sister chromatids become paired together. In contrast to the structural cohesins, the deposition and establishment factors are required only during S phase. Acts by acetylating the cohesin complex component SMC3. The protein is N-acetyltransferase ECO1 (ECO1) of Debaryomyces hansenii (strain ATCC 36239 / CBS 767 / BCRC 21394 / JCM 1990 / NBRC 0083 / IGC 2968) (Yeast).